The chain runs to 484 residues: Cytochrome P450 monooxygenase poxD (484 aa).

The helical transmembrane segment at 2–24 (VSPVVLATTAMIVVFLLAQRYLS) threads the bilayer. C429 lines the heme pocket.

It belongs to the cytochrome P450 family. Heme serves as cofactor.

The protein resides in the membrane. The protein operates within secondary metabolite biosynthesis. Functionally, cytochrome P450 monooxygenase; part of the gene cluster that mediates the biosynthesis of oxaleimides, cytotoxic compounds containing an unusual disubstituted succinimide moiety. The first step of the pathway is provided by the HR-PKS poxF that serves in a new mode of collaborative biosynthesis with the PKS-NRPS poxE, by providing the olefin containing amino acid substrate via the synthesis of an ACP-bound dec-4-enoate. The cytochrome P450 monooxygenase poxM-catalyzed oxidation at the alpha-position creates the enzyme-bound 2-hydroxydec-4-enoyl-ACP thioester, which may be prone to spontaneous hydrolysis to yield 2-hydroxydec-4-enoic acid due to increased electrophilicity of the carbonyl. 2-hydroxydec-4-enoic acid can then be further oxidized by poxM to yield the alpha-ketoacid 2-oxodec-4-enoicacid, which is reductively aminated by the aminotransferase poxL to yield (S,E)-2-aminodec-4-enoic acid. The Hybrid PKS-NRPS synthetase poxE then performs condensation between the octaketide product of its PKS modules and the amino group of (S,E)-2-aminodec-4-enoic acid which is activated and incorporated by the adenylation domain. The resulting aminoacyl product can be cyclized by the Diels-Alderase PoxQ and reductively released by the reductive (R) domain of poxE to yield an aldehyde intermediate. The released aldehyde is then substrate for a Knoevenagel condensation by the hydrolyase poxO followed by an oxidation at the 5-position of the pyrrolidone ring. The presence of the olefin from the amino acid building block allows for migration of the substituted allyl group to occur. This allylic transposition reaction takes place in a conjugate addition, semipinacol-like fashion to yield a succinimide intermediate. Iterative two-electron oxidations of the C7 methyl of the succinimide intermediate to the carboxylic acid can be catalyzed by one of two remaining cytochrome P450 monooxygenasess poxC or poxD to yield oxaleimide A. Subsequent oxidation yields the maleimide scaffold oxaleimide I. Both oxaleimide A and oxaleimide I can undergo oxidative modifications in the decalin ring to yield the series of products oxaleimides B to H. This Penicillium oxalicum protein is Cytochrome P450 monooxygenase poxD.